Consider the following 422-residue polypeptide: Serine--tRNA ligase (422 aa).

Residue 229–231 (TAE) coordinates L-serine. Residues 260-262 (RRE) and V276 contribute to the ATP site. Residue E283 participates in L-serine binding. Residue 349–352 (EVTS) participates in ATP binding. T384 contributes to the L-serine binding site.

This sequence belongs to the class-II aminoacyl-tRNA synthetase family. Type-1 seryl-tRNA synthetase subfamily. As to quaternary structure, homodimer. The tRNA molecule binds across the dimer.

The protein localises to the cytoplasm. It carries out the reaction tRNA(Ser) + L-serine + ATP = L-seryl-tRNA(Ser) + AMP + diphosphate + H(+). The enzyme catalyses tRNA(Sec) + L-serine + ATP = L-seryl-tRNA(Sec) + AMP + diphosphate + H(+). Its pathway is aminoacyl-tRNA biosynthesis; selenocysteinyl-tRNA(Sec) biosynthesis; L-seryl-tRNA(Sec) from L-serine and tRNA(Sec): step 1/1. Its function is as follows. Catalyzes the attachment of serine to tRNA(Ser). Is also able to aminoacylate tRNA(Sec) with serine, to form the misacylated tRNA L-seryl-tRNA(Sec), which will be further converted into selenocysteinyl-tRNA(Sec). In Treponema denticola (strain ATCC 35405 / DSM 14222 / CIP 103919 / JCM 8153 / KCTC 15104), this protein is Serine--tRNA ligase.